Here is a 4652-residue protein sequence, read N- to C-terminus: Low-density lipoprotein receptor-related protein 2 (4652 aa).

Positions Met-1–Gly-25 are cleaved as a signal peptide. At Arg-26–Val-4422 the chain is on the extracellular side. LDL-receptor class A domains follow at residues Glu-27–Pro-63, Thr-66–Pro-104, Thr-108–Arg-144, Asn-142–Thr-181, Arg-183–Ser-219, Pro-223–Glu-259, and Glu-267–Asp-308. 21 disulfides stabilise this stretch: Cys-28–Cys-40, Cys-35–Cys-53, Cys-47–Cys-62, Cys-67–Cys-80, Cys-74–Cys-93, Cys-87–Cys-103, Cys-109–Cys-121, Cys-116–Cys-134, Cys-128–Cys-143, Cys-143–Cys-158, Cys-153–Cys-171, Cys-165–Cys-180, Cys-184–Cys-196, Cys-191–Cys-209, Cys-203–Cys-218, Cys-224–Cys-236, Cys-231–Cys-249, Cys-243–Cys-258, Cys-268–Cys-281, Cys-275–Cys-294, and Cys-288–Cys-307. Residues Asn-160 and Asn-179 are each glycosylated (N-linked (GlcNAc...) asparagine). Asn-341 is a glycosylation site (N-linked (GlcNAc...) asparagine). An EGF-like 1; calcium-binding domain is found at Asp-348–Arg-386. Intrachain disulfides connect Cys-352/Cys-362, Cys-358/Cys-371, and Cys-373/Cys-385. N-linked (GlcNAc...) asparagine glycosylation occurs at Asn-388. LDL-receptor class B repeat units follow at residues Ser-436–Asn-478, Asn-479–Val-521, Gly-522–Ala-568, Lys-569–Asn-613, Asn-753–Ser-795, Arg-796–Ala-837, Gly-838–Ser-881, and Ser-882–Tyr-925. N-linked (GlcNAc...) asparagine glycosylation is present at Asn-771. An N-linked (GlcNAc...) asparagine glycan is attached at Asn-866. N-linked (GlcNAc...) asparagine glycosylation occurs at Asn-1015. In terms of domain architecture, LDL-receptor class A 8 spans Gln-1025 to Gly-1061. 3 disulfide bridges follow: Cys-1026–Cys-1038, Cys-1033–Cys-1051, and Cys-1045–Cys-1060. Asn-1064 is a glycosylation site (N-linked (GlcNAc...) asparagine). LDL-receptor class A domains are found at residues Ser-1066–Ser-1104, Ser-1110–Asp-1146, Thr-1150–Val-1186, Asn-1188–Pro-1225, Met-1231–Pro-1269, Thr-1272–Pro-1308, and Leu-1313–Asn-1351. Disulfide bonds link Cys-1067–Cys-1081, Cys-1074–Cys-1094, Cys-1088–Cys-1103, Cys-1111–Cys-1123, Cys-1118–Cys-1136, Cys-1130–Cys-1145, Cys-1151–Cys-1163, Cys-1158–Cys-1176, and Cys-1170–Cys-1185. The N-linked (GlcNAc...) asparagine glycan is linked to Asn-1102. Trp-1128, Asp-1131, Asp-1133, Asp-1135, Asp-1141, and Glu-1142 together coordinate Ca(2+). Residue Asn-1188 is glycosylated (N-linked (GlcNAc...) asparagine). 12 disulfides stabilise this stretch: Cys-1189–Cys-1202, Cys-1196–Cys-1215, Cys-1209–Cys-1224, Cys-1232–Cys-1245, Cys-1239–Cys-1258, Cys-1252–Cys-1268, Cys-1273–Cys-1285, Cys-1280–Cys-1298, Cys-1292–Cys-1307, Cys-1314–Cys-1327, Cys-1321–Cys-1340, and Cys-1334–Cys-1350. Residues Tyr-1207, Asp-1210, Val-1212, Asp-1214, Asp-1220, and Glu-1221 each contribute to the Ca(2+) site. Asn-1329 is a glycosylation site (N-linked (GlcNAc...) asparagine). N-linked (GlcNAc...) asparagine glycosylation is found at Asn-1385, Asn-1452, Asn-1498, and Asn-1552. LDL-receptor class B repeat units follow at residues Gly-1480–Gly-1522, Arg-1523–Val-1565, Arg-1568–Thr-1611, Arg-1612–Glu-1654, Asp-1655–Ala-1696, Gln-1789–Ser-1831, Arg-1832–Lys-1881, Gly-1882–Glu-1929, Gln-1930–Tyr-1971, and Leu-1972–Arg-2012. 2 N-linked (GlcNAc...) asparagine glycosylation sites follow: Asn-1677 and Asn-1809. Residue Asn-2053 is glycosylated (N-linked (GlcNAc...) asparagine). LDL-receptor class B repeat units follow at residues Gly-2105 to Ala-2154, Gly-2155 to Asn-2199, Arg-2200 to Ser-2243, Gly-2244 to Ser-2287, Asn-2429 to Gly-2475, Arg-2476 to Gln-2516, Gly-2517 to Glu-2560, Asn-2561 to Tyr-2602, and Ile-2603 to Asn-2644. 2 N-linked (GlcNAc...) asparagine glycosylation sites follow: Asn-2175 and Asn-2222. Asn-2485 is a glycosylation site (N-linked (GlcNAc...) asparagine). 10 consecutive LDL-receptor class A domains span residues Arg-2696–Ala-2734, Thr-2737–Arg-2773, Ser-2776–Ala-2815, Thr-2818–Val-2857, Thr-2860–Val-2897, Thr-2902–Glu-2941, Asn-2944–Thr-2986, Asn-2989–Lys-3025, Ala-3028–His-3066, and Thr-3071–Gly-3107. 18 disulfides stabilise this stretch: Cys-2697–Cys-2709, Cys-2704–Cys-2722, Cys-2716–Cys-2733, Cys-2738–Cys-2750, Cys-2745–Cys-2763, Cys-2757–Cys-2772, Cys-2777–Cys-2790, Cys-2785–Cys-2803, Cys-2797–Cys-2814, Cys-2819–Cys-2832, Cys-2826–Cys-2845, Cys-2839–Cys-2856, Cys-2861–Cys-2873, Cys-2868–Cys-2886, Cys-2880–Cys-2896, Cys-2903–Cys-2915, Cys-2910–Cys-2928, and Cys-2922–Cys-2940. N-linked (GlcNAc...) asparagine glycosylation is present at Asn-2698. N-linked (GlcNAc...) asparagine glycosylation occurs at Asn-2778. Asn-2806 and Asn-2807 each carry an N-linked (GlcNAc...) asparagine glycan. Asn-2944 carries an N-linked (GlcNAc...) asparagine glycan. 3 cysteine pairs are disulfide-bonded: Cys-2945–Cys-2962, Cys-2952–Cys-2975, and Cys-2969–Cys-2985. Asn-2984 and Asn-2989 each carry an N-linked (GlcNAc...) asparagine glycan. Intrachain disulfides connect Cys-2990/Cys-3002, Cys-2997/Cys-3015, Cys-3009/Cys-3024, Cys-3029/Cys-3041, Cys-3036/Cys-3054, Cys-3048/Cys-3065, Cys-3072/Cys-3084, Cys-3079/Cys-3097, and Cys-3091/Cys-3106. An N-linked (GlcNAc...) asparagine glycan is attached at Asn-3122. The EGF-like 2; calcium-binding domain occupies Asp-3149–Arg-3189. Cystine bridges form between Cys-3153-Cys-3164, Cys-3160-Cys-3173, and Cys-3175-Cys-3188. Asn-3208, Asn-3254, Asn-3312, and Asn-3352 each carry an N-linked (GlcNAc...) asparagine glycan. LDL-receptor class B repeat units follow at residues Glu-3236–Thr-3278, Arg-3279–Arg-3321, Gly-3330–Asn-3373, Asp-3374–Thr-3417, and Ile-3418–Tyr-3458. Residues Asn-3435 and Asn-3444 are each glycosylated (N-linked (GlcNAc...) asparagine). 9 LDL-receptor class A domains span residues Met-3509–Pro-3547, Phe-3550–Glu-3588, Arg-3591–Ala-3629, Thr-3632–Met-3670, Arg-3675–Glu-3713, Thr-3716–Val-3753, Gln-3756–Glu-3792, Thr-3795–Pro-3831, and Tyr-3839–Leu-3877. 27 disulfide bridges follow: Cys-3510-Cys-3523, Cys-3517-Cys-3536, Cys-3530-Cys-3546, Cys-3551-Cys-3563, Cys-3558-Cys-3576, Cys-3570-Cys-3587, Cys-3592-Cys-3604, Cys-3599-Cys-3617, Cys-3611-Cys-3628, Cys-3633-Cys-3645, Cys-3640-Cys-3658, Cys-3652-Cys-3669, Cys-3676-Cys-3690, Cys-3684-Cys-3703, Cys-3697-Cys-3712, Cys-3717-Cys-3730, Cys-3725-Cys-3743, Cys-3737-Cys-3752, Cys-3757-Cys-3769, Cys-3764-Cys-3782, Cys-3776-Cys-3791, Cys-3796-Cys-3808, Cys-3803-Cys-3821, Cys-3815-Cys-3830, Cys-3840-Cys-3852, Cys-3847-Cys-3865, and Cys-3859-Cys-3876. N-linked (GlcNAc...) asparagine glycosylation occurs at Asn-3562. The N-linked (GlcNAc...) asparagine glycan is linked to Asn-3678. N-linked (GlcNAc...) asparagine glycosylation occurs at Asn-3878. LDL-receptor class A domains follow at residues Thr-3880–Leu-3919 and Pro-3925–Asn-3961. 12 cysteine pairs are disulfide-bonded: Cys-3881-Cys-3894, Cys-3889-Cys-3907, Cys-3901-Cys-3918, Cys-3926-Cys-3938, Cys-3933-Cys-3951, Cys-3945-Cys-3960, Cys-3968-Cys-3977, Cys-3973-Cys-3987, Cys-3989-Cys-4003, Cys-4009-Cys-4019, Cys-4015-Cys-4028, and Cys-4030-Cys-4045. Residues Glu-3964–Glu-4004 enclose the EGF-like 3 domain. Asn-3976 carries N-linked (GlcNAc...) asparagine glycosylation. Residues Asp-4005–Ala-4046 enclose the EGF-like 4; calcium-binding domain. N-linked (GlcNAc...) asparagine glycosylation is present at Asn-4066. LDL-receptor class B repeat units lie at residues Arg-4152 to Gln-4194, Gly-4195 to Asn-4238, and Asp-4240 to Gln-4281. An N-linked (GlcNAc...) asparagine glycan is attached at Asn-4325. Residues Met-4375–Glu-4409 enclose the EGF-like 5 domain. Intrachain disulfides connect Cys-4379/Cys-4387, Cys-4381/Cys-4397, and Cys-4399/Cys-4408. A helical membrane pass occupies residues Ala-4423 to Phe-4443. Topologically, residues His-4444–Ala-4652 are cytoplasmic. Residues Ser-4450–Pro-4459 carry the SH3-binding motif. The short motif at Ile-4453–Leu-4458 is the PxLPxI/L motif 1; mediates interaction with ANKRA2 element. The PxLPxI/L motif 2; mediates interaction with ANKRA2 signature appears at Pro-4456–Leu-4461. Ser-4460 is subject to Phosphoserine. The short motif at Phe-4518–Tyr-4523 is the Endocytosis signal element. Polar residues predominate over residues Thr-4536 to Ser-4553. Positions Thr-4536–Ala-4652 are disordered. Phosphoserine is present on Ser-4568. Positions Gln-4588–Glu-4601 are interaction with DAB2. Residues Asn-4594–Tyr-4597 carry the NPXY motif motif. The SH2-binding motif lies at Tyr-4597–Thr-4600. Positions Val-4610 to Lys-4621 match the SH3-binding motif. Residue Ser-4615 is modified to Phosphoserine. Over residues Lys-4626–Glu-4636 the composition is skewed to polar residues. Residue Thr-4629 is modified to Phosphothreonine. Ser-4650 carries the phosphoserine modification.

This sequence belongs to the LDLR family. In terms of assembly, binds plasminogen, extracellular matrix components, plasminogen activator-plasminogen activator inhibitor type I complex, apolipoprotein E-enriched beta-VLDL, lipoprotein lipase, lactoferrin, CLU/clusterin and calcium. Forms a multimeric complex together with LRPAP1. Interacts (via PxLPxI/L motif) with ANKRA2 (via ankyrin repeats). Interacts with LRP2BP. Interacts (via NPXY motif) with DAB2; the interaction is not affected by tyrosine phosphorylation of the NPXY motif. Interacts with MB. Interacts with BMP4. Interacts with the Sonic hedgehog protein N-product which is the active product of SHH. Interacts with CST3 in a calcium-dependent manner. Interacts with the vitamin-D binding protein GC/DBP. Interacts with sex hormone-binding protein SHBG. Interacts with angiotensin-2. Also interacts with angiotensin 1-7. Interacts with APOM. Interacts with selenoprotein SEPP1. Interacts with LEP. Interacts with ALB. Interacts with the antiapoptotic protein BIRC5/survivin. Interacts with matrix metalloproteinase MMP2 in complex with metalloproteinase inhibitor TIMP1. In neurons, forms a trimeric complex with APP and APPB1/FE65. Interacts with LDLRAP1/ARH; mediates trafficking of LRP2 to the endocytic recycling compartment. Does not interact with beta-amyloid protein 40 alone but interacts with the complex composed of beta-amyloid protein 40 and CLU/APOJ. Interacts with MDK. Post-translationally, a fraction undergoes proteolytic cleavage of the extracellular domain at the cell membrane to generate a cytoplasmic tail fragment. This is internalized into the early endosome from where it trafficks in an LDLRAP1/ARH-dependent manner to the endocytic recycling compartment (ERC). In the ERC, it is further cleaved by gamma-secretase to release a fragment which translocates to the nucleus and mediates transcriptional repression. In terms of processing, N-glycosylation is required for ligand binding.

The protein localises to the apical cell membrane. The protein resides in the endosome lumen. Its subcellular location is the membrane. It localises to the clathrin-coated pit. It is found in the cell projection. The protein localises to the dendrite. The protein resides in the axon. Functionally, multiligand endocytic receptor. Acts together with CUBN to mediate endocytosis of high-density lipoproteins. Mediates receptor-mediated uptake of polybasic drugs such as aprotinin, aminoglycosides and polymyxin B. In the kidney, mediates the tubular uptake and clearance of leptin. Also mediates transport of leptin across the blood-brain barrier through endocytosis at the choroid plexus epithelium. Endocytosis of leptin in neuronal cells is required for hypothalamic leptin signaling and leptin-mediated regulation of feeding and body weight. Mediates endocytosis and subsequent lysosomal degradation of CST3 in kidney proximal tubule cells. Mediates renal uptake of 25-hydroxyvitamin D3 in complex with the vitamin D3 transporter GC/DBP. Mediates renal uptake of metallothionein-bound heavy metals. Together with CUBN, mediates renal reabsorption of myoglobin. Mediates renal uptake and subsequent lysosomal degradation of APOM. Plays a role in kidney selenium homeostasis by mediating renal endocytosis of selenoprotein SEPP1. Mediates renal uptake of the antiapoptotic protein BIRC5/survivin which may be important for functional integrity of the kidney. Mediates renal uptake of matrix metalloproteinase MMP2 in complex with metalloproteinase inhibitor TIMP1. Mediates endocytosis of Sonic hedgehog protein N-product (ShhN), the active product of SHH. Also mediates ShhN transcytosis. In the embryonic neuroepithelium, mediates endocytic uptake and degradation of BMP4, is required for correct SHH localization in the ventral neural tube and plays a role in patterning of the ventral telencephalon. Required at the onset of neurulation to sequester SHH on the apical surface of neuroepithelial cells of the rostral diencephalon ventral midline and to control PTCH1-dependent uptake and intracellular trafficking of SHH. During neurulation, required in neuroepithelial cells for uptake of folate bound to the folate receptor FOLR1 which is necessary for neural tube closure. In the adult brain, negatively regulates BMP signaling in the subependymal zone which enables neurogenesis to proceed. In astrocytes, mediates endocytosis of ALB which is required for the synthesis of the neurotrophic factor oleic acid. Involved in neurite branching. During optic nerve development, required for SHH-mediated migration and proliferation of oligodendrocyte precursor cells. Mediates endocytic uptake and clearance of SHH in the retinal margin which protects retinal progenitor cells from mitogenic stimuli and keeps them quiescent. Plays a role in reproductive organ development by mediating uptake in reproductive tissues of androgen and estrogen bound to the sex hormone binding protein SHBG. Mediates endocytosis of angiotensin-2. Also mediates endocytosis of angiotensis 1-7. Binds to the complex composed of beta-amyloid protein 40 and CLU/APOJ and mediates its endocytosis and lysosomal degradation. Required for embryonic heart development. Required for normal hearing, possibly through interaction with estrogen in the inner ear. This Sus scrofa (Pig) protein is Low-density lipoprotein receptor-related protein 2.